The sequence spans 521 residues: Glutamyl-tRNA(Gln) amidotransferase subunit B, mitochondrial (521 aa).

The N-terminal 22 residues, 1–22 (MIALLRWGIARPSAPLRWSRCF), are a transit peptide targeting the mitochondrion.

Belongs to the GatB/GatE family. GatB subfamily. Subunit of the heterotrimeric GatCAB amidotransferase (AdT) complex, composed of A, B and C subunits.

The protein resides in the mitochondrion. It catalyses the reaction L-glutamyl-tRNA(Gln) + L-glutamine + ATP + H2O = L-glutaminyl-tRNA(Gln) + L-glutamate + ADP + phosphate + H(+). Allows the formation of correctly charged Gln-tRNA(Gln) through the transamidation of misacylated Glu-tRNA(Gln) in the mitochondria. The reaction takes place in the presence of glutamine and ATP through an activated gamma-phospho-Glu-tRNA(Gln). The sequence is that of Glutamyl-tRNA(Gln) amidotransferase subunit B, mitochondrial from Cryptococcus neoformans var. neoformans serotype D (strain JEC21 / ATCC MYA-565) (Filobasidiella neoformans).